We begin with the raw amino-acid sequence, 130 residues long: Large ribosomal subunit protein bL12 (130 aa).

Belongs to the bacterial ribosomal protein bL12 family. As to quaternary structure, homodimer. Part of the ribosomal stalk of the 50S ribosomal subunit. Forms a multimeric L10(L12)X complex, where L10 forms an elongated spine to which 2 to 4 L12 dimers bind in a sequential fashion. Binds GTP-bound translation factors.

Functionally, forms part of the ribosomal stalk which helps the ribosome interact with GTP-bound translation factors. Is thus essential for accurate translation. In Thermobifida fusca (strain YX), this protein is Large ribosomal subunit protein bL12.